Consider the following 175-residue polypeptide: uncharacterized protein (175 aa).

This is an uncharacterized protein from Methanocaldococcus jannaschii (strain ATCC 43067 / DSM 2661 / JAL-1 / JCM 10045 / NBRC 100440) (Methanococcus jannaschii).